The sequence spans 283 residues: Pantothenate synthetase (283 aa).

30-37 (MGYLHDGH) contacts ATP. His37 functions as the Proton donor in the catalytic mechanism. Gln61 contributes to the (R)-pantoate binding site. Gln61 is a binding site for beta-alanine. ATP is bound at residue 148-151 (GQKD). Gln154 serves as a coordination point for (R)-pantoate. Residue 185–188 (MSSR) coordinates ATP.

The protein belongs to the pantothenate synthetase family. In terms of assembly, homodimer.

It is found in the cytoplasm. The enzyme catalyses (R)-pantoate + beta-alanine + ATP = (R)-pantothenate + AMP + diphosphate + H(+). Its pathway is cofactor biosynthesis; (R)-pantothenate biosynthesis; (R)-pantothenate from (R)-pantoate and beta-alanine: step 1/1. Its function is as follows. Catalyzes the condensation of pantoate with beta-alanine in an ATP-dependent reaction via a pantoyl-adenylate intermediate. The chain is Pantothenate synthetase from Carboxydothermus hydrogenoformans (strain ATCC BAA-161 / DSM 6008 / Z-2901).